We begin with the raw amino-acid sequence, 551 residues long: MSGGDGRGHNTGAHSTSGNINGGPTGLGVGGGASDGSGWSSENNPWGGGSGSGIHWGGGSGHGNGGGNGNSGGGSGTGGNLSAVAAPVAFGFPALSTPGAGGLAVSISAGALSAAIADIMAALKGPFKFGLWGVALYGVLPSQIAKDDPNMMSKIVTSLPADDITESPVSSLPLDKATVNVNVRVVDDVKDERQNISVVSGVPMSVPVVDAKPTERPGVFTASIPGAPVLNISVNNSTPAVQTLSPGVTNNTDKDVRPAGFTQGGNTRDAVIRFPKDSGHNAVYVSVSDVLSPDQVKQRQDEENRRQQEWDATHPVEAAERNYERARAELNQANEDVARNQERQAKAVQVYNSRKSELDAANKTLADAIAEIKQFNRFAHDPMAGGHRMWQMAGLKAQRAQTDVNNKQAAFDAAAKEKSDADAALSSAMESRKKKEDKKRSAENNLNDEKNKPRKGFKDYGHDYHPAPKTENIKGLGDLKPGIPKTPKQNGGGKRKRWTGDKGRKIYEWDSQHGELEGYRASDGQHLGSFDPKTGNQLKGPDPKRNIKKYL.

Disordered regions lie at residues 1 to 74 (MSGG…SGGG), 243 to 269 (TLSP…NTRD), and 293 to 320 (PDQV…EAAE). A translocation (T) domain region spans residues 1–315 (MSGGDGRGHN…RQQEWDATHP (315 aa)). The segment covering 20 to 35 (INGGPTGLGVGGGASD) has biased composition (gly residues). A Binds to TolB motif is present at residues 35–39 (DGSGW). The segment covering 36 to 45 (GSGWSSENNP) has biased composition (low complexity). The span at 46 to 74 (WGGGSGSGIHWGGGSGHGNGGGNGNSGGG) shows a compositional bias: gly residues. Basic and acidic residues predominate over residues 296–320 (VKQRQDEENRRQQEWDATHPVEAAE). The stretch at 316–378 (VEAAERNYER…IAEIKQFNRF (63 aa)) forms a coiled coil. Residues 316–450 (VEAAERNYER…SAENNLNDEK (135 aa)) are receptor-binding (R) domain. A Hairpin motif is present at residues 379–385 (AHDPMAG). Positions 386-450 (GHRMWQMAGL…SAENNLNDEK (65 aa)) form a coiled coil. Positions 406-505 (NKQAAFDAAA…KRWTGDKGRK (100 aa)) are disordered. Residues 430–472 (ESRKKKEDKKRSAENNLNDEKNKPRKGFKDYGHDYHPAPKTEN) show a composition bias toward basic and acidic residues. A linker region spans residues 451–456 (NKPRKG). Residues 455–551 (KGFKDYGHDY…DPKRNIKKYL (97 aa)) are ribosome inactivating activity. The segment at 457-551 (FKDYGHDYHP…DPKRNIKKYL (95 aa)) is cytotoxic RNase (C) domain. His-513 (proton donor) is an active-site residue. Glu-517 functions as the Proton acceptor in the catalytic mechanism. Residues 517 to 551 (EGYRASDGQHLGSFDPKTGNQLKGPDPKRNIKKYL) form a disordered region. The tract at residues 530–551 (FDPKTGNQLKGPDPKRNIKKYL) is binding of immunity protein. Arg-545 is an active-site residue.

It belongs to the cloacin colicin family. In terms of assembly, native colicin E3 is a 1:1 complex of A chain and protein B (cognate immunity protein, Im3); protein A is 1,000-fold more active in inactivating ribosomes than the native complex. The cytotoxic fragment (residues 456-551, C95) forms a 1:1 complex with Im3. The receptor-binding (R) domain binds obliquely to its receptor BtuB without displacing BtuB's central plug; binding unfolds the R domain. The N-terminal 83 residues (T83) bind OmpF; trimeric complexes with colicin E3, BtuB and OmpF can be cross-linked and immunoprecipitated. Probably inserts into the OmpF pore as an unfolded peptide and spans the OmpF pore. In a complex with T.thermophilus 70S ribosomes, cytotoxic fragment C96 contacts 16S rRNA, 23S rRNA, mRNA, P-site tRNA and ribosomal protein uS12.

It is found in the secreted. Functionally, colicins are polypeptide toxins produced by and active against E.coli and closely related bacteria. Cleaves 16S rRNA between adenosine-1492 and guanosine-1493 (E.coli 16S rRNA numbering), releasing a 49 nucleotide (nt) 'colicin' fragment. Inactivates 70S ribosomes or 30S subunits by endonucleolytically cleaving 16S RNA at a specific site about 50 nt from its C-terminus. Produces 5'-OH-guanosine and a 2',3'-cyclic phosphate adenosine. Mixing a susceptible (e.g. strain K12 / A19) and colicin E3 producing strain results in total protein translation inhibition within 11 minutes. Its activity is inhibited by cognate immunity protein Im3. Its function is as follows. Uses BtuB, the vitamin B transporter, as a receptor on the outer membrane; binds via the receptor (R) domain. Then the translocation domain (T) probably 'fishes' for its outer membrane translocon protein, OmpF. The N-terminal 83 residues (T83) can bind to and occlude OmpF channels. A complex of the cytotoxic C-terminal 96 residues (C96) plus the immunity protein does not occlude OmpF; upon complex separation from the immunity protein C96 becomes disordered and is able to bind OmpF. The N-terminus probably binds TolB and then reinserts into an empty pore of trimeric OmpF; the rest of the protein is pulled through OmpF and crosses the inner membrane, where the cytotoxic fragment is probably released by protease FtsH. The polypeptide is Colicin E3 (ceaC) (Escherichia coli).